Here is a 235-residue protein sequence, read N- to C-terminus: RAD9, HUS1, RAD1-interacting nuclear orphan protein 1 (235 aa).

The residue at position 50 (Ser-50) is a Phosphoserine. Positions 54-60 (SWVLPQF) match the RAD1-binding motif motif. The tract at residues 66-106 (SRFPTHRKHHRDQARHPTRRSTCKFPRLTFESPESSSSETL) is disordered. Over residues 69-87 (PTHRKHHRDQARHPTRRST) the composition is skewed to basic residues. Residues 96 to 106 (ESPESSSSETL) show a composition bias toward low complexity. Positions 123–130 (RRPLVPLF) match the D-box motif. Residues 156 to 198 (QTPGSSVREDPISPDQKENSLPSCILGPRTPRTPEPGPVLVKD) form a disordered region. Residues 162–173 (VREDPISPDQKE) show a composition bias toward basic and acidic residues. Positions 171-175 (QKENS) match the KEN box motif.

In terms of assembly, interacts (when phosphorylated by PLK1) with POLQ; promoting POLQ recruitment to DNA damage sites. Interacts with RAD1; interaction is direct and promotes association with the 9-1-1 (RAD9-RAD1-HUS1) complex. Interacts with RAD18. Interacts with TOPBP1. Interacts with UBE2N. In terms of processing, phosphorylated at Ser-50 by PLK1, promoting interaction with polymerase theta (POLQ). Ubiquitinated and degraded by the APC/C complex upon mitotic exit.

It is found in the nucleus. The protein localises to the chromosome. In terms of biological role, involved in microhomology-mediated end-joining (MMEJ) DNA repair by promoting recruitment of polymerase theta (POLQ) to DNA damage sites during mitosis. MMEJ is an alternative non-homologous end-joining (NHEJ) machinery that takes place during mitosis to repair double-strand breaks in DNA that originate in S-phase. Accumulates in M-phase; following phosphorylation by PLK1, interacts with POLQ, enabling its recruitment to double-strand breaks for subsequent repair. Also involved in the DNA damage response (DDR) signaling in response to genotoxic stresses such as ionizing radiation (IR) during the S phase. Recruited to sites of DNA damage through interaction with the 9-1-1 cell-cycle checkpoint response complex and TOPBP1 in a ATR-dependent manner. Required for the progression of the G1 to S phase transition. Plays a role in the stimulation of CHEK1 phosphorylation. The protein is RAD9, HUS1, RAD1-interacting nuclear orphan protein 1 (Rhno1) of Rattus norvegicus (Rat).